Here is a 198-residue protein sequence, read N- to C-terminus: Transmembrane gamma-carboxyglutamic acid protein 2 (198 aa).

The signal sequence occupies residues 1-17 (MRGRPSLLLVYMGLATC). Positions 18–51 (LDTSPHREQNQVLDIFLDAPEAQSFLVGRRRFPR) are excised as a propeptide. The 47-residue stretch at 52-98 (ANHWDLELLTPGNLERECLEERCSWEEAREYFEDNTLTERFWESYTY) folds into the Gla domain. The Extracellular segment spans residues 52 to 111 (ANHWDLELLTPGNLERECLEERCSWEEAREYFEDNTLTERFWESYTYNGKGGRGRVDVAG). Cysteines 69 and 74 form a disulfide. A 4-carboxyglutamate modification is found at E72. A helical membrane pass occupies residues 112–132 (LAVGLTSGILLIVLAGLGAFW). At 133 to 198 (YLHYRRRRLR…PPYSSLRRPH (66 aa)) the chain is on the cytoplasmic side. Residues 156-198 (PLSPQTPQSPPLPPGLPTYEQALAASGVHDAPPPPYSSLRRPH) are disordered. Residues 162–171 (PQSPPLPPGL) show a composition bias toward pro residues. Positions 171 to 174 (LPTY) match the LPXY motif; mediates binding to WW domain-containing proteins motif. A PPXY motif; mediates binding to WW domain-containing proteins motif is present at residues 188–191 (PPPY).

Interacts with NEDD4. Interacts with transcriptional coactivator YAP1. Gamma-carboxyglutamate residues are formed by vitamin K dependent carboxylation. These residues are essential for the binding of calcium.

The protein localises to the cell membrane. The protein is Transmembrane gamma-carboxyglutamic acid protein 2 (Prrg2) of Mus musculus (Mouse).